We begin with the raw amino-acid sequence, 350 residues long: Cephaeline 6'-O-methyltransferase CiOMT (350 aa).

Glycine 193, aspartate 216, aspartate 236, methionine 237, and lysine 250 together coordinate S-adenosyl-L-methionine. Catalysis depends on histidine 254, which acts as the Proton acceptor.

It belongs to the class I-like SAM-binding methyltransferase superfamily. Cation-independent O-methyltransferase family.

It is found in the cytoplasm. Its subcellular location is the cytosol. It carries out the reaction 7'-O-demethylcephaeline + S-adenosyl-L-methionine = cephaeline + S-adenosyl-L-homocysteine + H(+). It catalyses the reaction cephaeline + S-adenosyl-L-methionine = emetine + S-adenosyl-L-homocysteine + H(+). The protein operates within alkaloid biosynthesis. With respect to regulation, inhibited by Co(2+), Ni(2+), Zn(2+) and Mn(2+) ions. Functionally, O-methyltransferase involved in the biosynthesis of ipecac and benzylisoquinoline monoterpenoid-isoquinoline alkaloids natural products, starting by the condensation of dopamine and secologanin, and including emetine and cephaeline, drugs used both as anti-protozoal (e.g. treatment of ameobiasis) and as emetic agents. Catalyzes successively the 7'-O-methylation of 7'-O-demethylcephaeline to produce cephaeline, and its 6'-O-methylation to produce emetine. The protein is Cephaeline 6'-O-methyltransferase CiOMT of Carapichea ipecacuanha (Ipecac).